Here is a 466-residue protein sequence, read N- to C-terminus: UDP-N-acetylmuramoylalanine--D-glutamate ligase (466 aa).

ATP is bound at residue glycine 121–threonine 127.

Belongs to the MurCDEF family.

Its subcellular location is the cytoplasm. It catalyses the reaction UDP-N-acetyl-alpha-D-muramoyl-L-alanine + D-glutamate + ATP = UDP-N-acetyl-alpha-D-muramoyl-L-alanyl-D-glutamate + ADP + phosphate + H(+). It participates in cell wall biogenesis; peptidoglycan biosynthesis. Functionally, cell wall formation. Catalyzes the addition of glutamate to the nucleotide precursor UDP-N-acetylmuramoyl-L-alanine (UMA). The polypeptide is UDP-N-acetylmuramoylalanine--D-glutamate ligase (Mesorhizobium japonicum (strain LMG 29417 / CECT 9101 / MAFF 303099) (Mesorhizobium loti (strain MAFF 303099))).